Consider the following 571-residue polypeptide: Wee1-like protein kinase 1-A (571 aa).

A disordered region spans residues 1–101 (MSLQPVPHRL…PDCPGTPPHK (101 aa)). Residues 81 to 98 (PASPPGPAASPPDCPGTP) show a composition bias toward pro residues. The Protein kinase domain occupies 224-494 (FHELEKIGSG…SMALVKHSVL (271 aa)). ATP contacts are provided by residues 230-238 (IGSGEFGSV) and K253. The active-site Proton acceptor is the D351. Positions 356 and 388 each coordinate Mg(2+). A coiled-coil region spans residues 500-539 (KNAEQLRIELNAEKFKNALLQKELKKAQIAKAAAEERALF).

This sequence belongs to the protein kinase superfamily. Ser/Thr protein kinase family. WEE1 subfamily. Zygotically expressed. Expressed in regions of the embryo that are devoid of mitotic cells, such as the involuting mesoderm.

The protein localises to the nucleus. The catalysed reaction is L-tyrosyl-[protein] + ATP = O-phospho-L-tyrosyl-[protein] + ADP + H(+). Functionally, acts as a zygotic negative regulator of entry into mitosis (G2 to M transition) by protecting the nucleus from cytoplasmically activated cyclin B1-complexed cdk1 before the onset of mitosis by mediating phosphorylation of cdk1 on 'Tyr-15'. Specifically phosphorylates and inactivates cyclin B1-complexed cdk1 reaching a maximum during G2 phase and a minimum as cells enter M phase. Phosphorylation of cyclin B1-cdk1 occurs exclusively on 'Tyr-15' and phosphorylation of monomeric cdk1 does not occur. Involved in convergent extension of the paraxial mesoderm during neurulation by inhibiting the cell cycle. In Xenopus laevis (African clawed frog), this protein is Wee1-like protein kinase 1-A (wee1-a).